The chain runs to 984 residues: Putative formate dehydrogenase SAUSA300_2258 (984 aa).

The region spanning glutamate 3–aspartate 79 is the 2Fe-2S ferredoxin-type domain. Residues cysteine 37, cysteine 48, cysteine 51, and cysteine 63 each contribute to the [2Fe-2S] cluster site. The 4Fe-4S His(Cys)3-ligated-type domain maps to aspartate 79–glycine 119. [4Fe-4S] cluster-binding residues include histidine 95, cysteine 99, cysteine 102, cysteine 109, cysteine 147, cysteine 150, cysteine 153, cysteine 157, cysteine 190, cysteine 193, cysteine 196, cysteine 200, cysteine 264, cysteine 267, cysteine 271, and cysteine 299. 4Fe-4S ferredoxin-type domains are found at residues proline 138–threonine 165 and asparagine 181–glutamate 211. Positions methionine 252–lysine 984 are formate dehydrogenase. One can recognise a 4Fe-4S Mo/W bis-MGD-type domain in the interval isoleucine 257–glutamine 313.

In the C-terminal section; belongs to the prokaryotic molybdopterin-containing oxidoreductase family. [2Fe-2S] cluster is required as a cofactor. It depends on [4Fe-4S] cluster as a cofactor. Mo-bis(molybdopterin guanine dinucleotide) serves as cofactor.

The enzyme catalyses formate + NAD(+) = CO2 + NADH. In Staphylococcus aureus (strain USA300), this protein is Putative formate dehydrogenase SAUSA300_2258.